A 229-amino-acid polypeptide reads, in one-letter code: Ribonuclease 3 (229 aa).

In terms of domain architecture, RNase III spans 4 to 133 (WEELQESVGF…FIGALYLDNG (130 aa)). Glu-46 is a Mg(2+) binding site. Asp-50 is a catalytic residue. Mg(2+) contacts are provided by Asp-119 and Glu-122. Glu-122 is a catalytic residue. Residues 159–228 (DYKTQLQEIV…AQFAINQLTH (70 aa)) form the DRBM domain.

The protein belongs to the ribonuclease III family. Homodimer. Mg(2+) serves as cofactor.

It is found in the cytoplasm. The enzyme catalyses Endonucleolytic cleavage to 5'-phosphomonoester.. In terms of biological role, digests double-stranded RNA. Involved in the processing of primary rRNA transcript to yield the immediate precursors to the large and small rRNAs (23S and 16S). Processes some mRNAs, and tRNAs when they are encoded in the rRNA operon. Processes pre-crRNA and tracrRNA of type II CRISPR loci if present in the organism. This is Ribonuclease 3 from Listeria monocytogenes serotype 4b (strain CLIP80459).